A 268-amino-acid polypeptide reads, in one-letter code: Zygote formation protein zyg1 (268 aa).

Plays an essential role in zygote formation by inducing sexual cell fusion. Overexpressing cells eventually formed many loose mounds, in which giant multinucleate cells were surrounded by normal-sized cells. This chain is Zygote formation protein zyg1 (zyg1), found in Dictyostelium mucoroides (Slime mold).